The primary structure comprises 343 residues: Protein RecA (343 aa).

66-73 (GPESSGKT) contacts ATP.

Belongs to the RecA family.

The protein localises to the cytoplasm. Can catalyze the hydrolysis of ATP in the presence of single-stranded DNA, the ATP-dependent uptake of single-stranded DNA by duplex DNA, and the ATP-dependent hybridization of homologous single-stranded DNAs. It interacts with LexA causing its activation and leading to its autocatalytic cleavage. In Nitrosomonas europaea (strain ATCC 19718 / CIP 103999 / KCTC 2705 / NBRC 14298), this protein is Protein RecA.